A 263-amino-acid polypeptide reads, in one-letter code: Rhomboid-like protease 3 (263 aa).

Transmembrane regions (helical) follow at residues 37-57 (KSIV…CVLS), 86-106 (VVTP…LVFI), 121-141 (KFLV…MLMQ), 142-162 (PWAL…GMAA), 189-209 (LIYF…GGFL), and 231-251 (VLFY…PPLL). The Nucleophile role is filled by serine 150. The active site involves histidine 204.

Belongs to the peptidase S54 family.

It is found in the membrane. The enzyme catalyses Cleaves type-1 transmembrane domains using a catalytic dyad composed of serine and histidine that are contributed by different transmembrane domains.. Its function is as follows. Serine protease involved in intramembrane proteolysis and the subsequent release of polypeptides from their membrane anchors. The sequence is that of Rhomboid-like protease 3 (ROM3) from Toxoplasma gondii.